Here is a 569-residue protein sequence, read N- to C-terminus: Proline--tRNA ligase (569 aa).

Belongs to the class-II aminoacyl-tRNA synthetase family. ProS type 1 subfamily. As to quaternary structure, homodimer.

Its subcellular location is the cytoplasm. The enzyme catalyses tRNA(Pro) + L-proline + ATP = L-prolyl-tRNA(Pro) + AMP + diphosphate. Its function is as follows. Catalyzes the attachment of proline to tRNA(Pro) in a two-step reaction: proline is first activated by ATP to form Pro-AMP and then transferred to the acceptor end of tRNA(Pro). As ProRS can inadvertently accommodate and process non-cognate amino acids such as alanine and cysteine, to avoid such errors it has two additional distinct editing activities against alanine. One activity is designated as 'pretransfer' editing and involves the tRNA(Pro)-independent hydrolysis of activated Ala-AMP. The other activity is designated 'posttransfer' editing and involves deacylation of mischarged Ala-tRNA(Pro). The misacylated Cys-tRNA(Pro) is not edited by ProRS. The chain is Proline--tRNA ligase from Halalkalibacterium halodurans (strain ATCC BAA-125 / DSM 18197 / FERM 7344 / JCM 9153 / C-125) (Bacillus halodurans).